A 330-amino-acid chain; its full sequence is Putative [LysW]-L-2-aminoadipate/[LysW]-L-glutamate phosphate reductase (330 aa).

Position 10-13 (10-13 (SGYI)) interacts with NADP(+). The active site involves Cys-142. NADP(+) is bound at residue Asn-297.

The protein belongs to the NAGSA dehydrogenase family. Type 1 subfamily. LysY sub-subfamily.

It is found in the cytoplasm. The enzyme catalyses [amino-group carrier protein]-C-terminal-N-(1-carboxy-5-oxopentan-1-yl)-L-glutamine + phosphate + NADP(+) = [amino-group carrier protein]-C-terminal-N-(1-carboxy-5-phosphooxy-5-oxopentan-1-yl)-L-glutamine + NADPH + H(+). The catalysed reaction is [amino-group carrier protein]-C-terminal-gamma-(L-glutamyl-5-semialdehyde)-L-glutamate + phosphate + NADP(+) = [amino-group carrier protein]-C-terminal-gamma-(5-phospho-L-glutamyl)-L-glutamate + NADPH + H(+). It functions in the pathway amino-acid biosynthesis; L-lysine biosynthesis via AAA pathway; L-lysine from L-alpha-aminoadipate (Thermus route): step 3/5. Its pathway is amino-acid biosynthesis; L-arginine biosynthesis. Functionally, involved in both the arginine and lysine biosynthetic pathways. This is Putative [LysW]-L-2-aminoadipate/[LysW]-L-glutamate phosphate reductase from Pyrococcus furiosus (strain ATCC 43587 / DSM 3638 / JCM 8422 / Vc1).